Consider the following 901-residue polypeptide: Aconitate hydratase A (901 aa).

Residues Cys-443, Cys-509, and Cys-512 each coordinate [4Fe-4S] cluster.

It belongs to the aconitase/IPM isomerase family. In terms of assembly, monomer. The cofactor is [4Fe-4S] cluster.

It catalyses the reaction citrate = D-threo-isocitrate. The enzyme catalyses (2S,3R)-3-hydroxybutane-1,2,3-tricarboxylate = 2-methyl-cis-aconitate + H2O. Its pathway is carbohydrate metabolism; tricarboxylic acid cycle; isocitrate from oxaloacetate: step 2/2. It participates in organic acid metabolism; propanoate degradation. Functionally, involved in the catabolism of short chain fatty acids (SCFA) via the tricarboxylic acid (TCA)(acetyl degradation route) and probably the 2-methylcitrate cycle I (propionate degradation route). Catalyzes the reversible isomerization of citrate to isocitrate via cis-aconitate. Could catalyze the hydration of 2-methyl-cis-aconitate to yield (2R,3S)-2-methylisocitrate. The apo form of AcnA functions as a RNA-binding regulatory protein. The sequence is that of Aconitate hydratase A (acnA) from Staphylococcus epidermidis (strain ATCC 35984 / DSM 28319 / BCRC 17069 / CCUG 31568 / BM 3577 / RP62A).